We begin with the raw amino-acid sequence, 568 residues long: Transport inhibitor response 1-like protein Os11g0515500 (568 aa).

Residues 1–45 (MVFFPEEVVEHILGFLASHRDRNAVSLVCREWYRVERLSRRSVLV) enclose the F-box domain. 1D-myo-inositol hexakisphosphate-binding positions include K69, 103–104 (KR), and R335. The segment at 338 to 343 (PANANA) is interaction with auxin-responsive proteins. 390–392 (SFR) contributes to the 1D-myo-inositol hexakisphosphate binding site. An interaction with auxin-responsive proteins region spans residues 394–398 (CVLDP). R425 is a binding site for 1D-myo-inositol hexakisphosphate. The interaction with auxin-responsive proteins stretch occupies residues 453–454 (AF). Residues 473 to 474 (KK) and R498 contribute to the 1D-myo-inositol hexakisphosphate site.

As to quaternary structure, part of a SCF (SKP1-cullin-F-box) protein ligase complex. May interact with auxin and auxin-responsive proteins.

It localises to the nucleus. It functions in the pathway protein modification; protein ubiquitination. The sequence is that of Transport inhibitor response 1-like protein Os11g0515500 from Oryza sativa subsp. japonica (Rice).